The chain runs to 225 residues: Uracil-DNA glycosylase (225 aa).

The active-site Proton acceptor is the Asp65.

The protein belongs to the uracil-DNA glycosylase (UDG) superfamily. UNG family.

It localises to the cytoplasm. It carries out the reaction Hydrolyzes single-stranded DNA or mismatched double-stranded DNA and polynucleotides, releasing free uracil.. Its function is as follows. Excises uracil residues from the DNA which can arise as a result of misincorporation of dUMP residues by DNA polymerase or due to deamination of cytosine. The protein is Uracil-DNA glycosylase of Clostridium perfringens (strain ATCC 13124 / DSM 756 / JCM 1290 / NCIMB 6125 / NCTC 8237 / Type A).